The primary structure comprises 137 residues: Small heat shock protein IbpA (137 aa).

The region spanning 28–137 (SQSNGGYPPY…ANKPRRIEIN (110 aa)) is the sHSP domain.

The protein belongs to the small heat shock protein (HSP20) family. Monomer. Forms homomultimers of about 100-150 subunits at optimal growth temperatures. Conformation changes to monomers at high temperatures or high ionic concentrations.

Its subcellular location is the cytoplasm. Its function is as follows. Associates with aggregated proteins, together with IbpB, to stabilize and protect them from irreversible denaturation and extensive proteolysis during heat shock and oxidative stress. Aggregated proteins bound to the IbpAB complex are more efficiently refolded and reactivated by the ATP-dependent chaperone systems ClpB and DnaK/DnaJ/GrpE. Its activity is ATP-independent. This Citrobacter koseri (strain ATCC BAA-895 / CDC 4225-83 / SGSC4696) protein is Small heat shock protein IbpA.